Reading from the N-terminus, the 361-residue chain is Glucose 1-dehydrogenase (361 aa).

Cys-41 contacts Zn(2+). Thr-43 provides a ligand contact to substrate. 2 residues coordinate Zn(2+): His-68 and Glu-69. 3 residues coordinate substrate: Glu-119, Glu-156, and Asn-160. Glu-156 lines the Zn(2+) pocket. Residues Asn-216–His-218, Phe-275–Thr-277, Ser-304–Asp-306, and Lys-349 contribute to the NADP(+) site. Asp-306 serves as a coordination point for substrate.

It belongs to the zinc-containing alcohol dehydrogenase family. Glucose 1-dehydrogenase subfamily. As to quaternary structure, homotetramer. Zn(2+) is required as a cofactor.

The enzyme catalyses D-glucose + NAD(+) = D-glucono-1,5-lactone + NADH + H(+). It catalyses the reaction D-glucose + NADP(+) = D-glucono-1,5-lactone + NADPH + H(+). The catalysed reaction is D-galactose + NAD(+) = D-galactono-1,4-lactone + NADH + H(+). It carries out the reaction D-galactose + NADP(+) = D-galactono-1,5-lactone + NADPH + H(+). In terms of biological role, catalyzes the NAD(P)(+)-dependent oxidation of D-glucose to D-gluconate via gluconolactone. Is also significantly active with galactose as substrate, but not with mannose or glucose 6-phosphate. Can utilize both NAD(+) and NADP(+) as electron acceptor, with a marked preference for NADP(+). Physiologically, may be involved in the degradation of both glucose and galactose through a non-phosphorylative variant of the Entner-Doudoroff pathway. The chain is Glucose 1-dehydrogenase from Thermoplasma acidophilum (strain ATCC 25905 / DSM 1728 / JCM 9062 / NBRC 15155 / AMRC-C165).